The primary structure comprises 79 residues: DNA gyrase inhibitor YacG (79 aa).

Cysteine 7, cysteine 10, cysteine 26, and cysteine 30 together coordinate Zn(2+).

It belongs to the DNA gyrase inhibitor YacG family. As to quaternary structure, interacts with GyrB. The cofactor is Zn(2+).

Inhibits all the catalytic activities of DNA gyrase by preventing its interaction with DNA. Acts by binding directly to the C-terminal domain of GyrB, which probably disrupts DNA binding by the gyrase. The chain is DNA gyrase inhibitor YacG from Shewanella halifaxensis (strain HAW-EB4).